Here is a 294-residue protein sequence, read N- to C-terminus: MHPRFQTAFAQLADNLQSALEPILADKYFPALLTGEQVSSLKSATGLDEDALAFALLPLAAACARTPLSNFNVGAIARGVSGTWYFGANMEFIGATMQQTVHAEQSAISHAWLSGEKALEAITVNYTPCGHCRQFMNELNSGLDLRIHLPGREAHALRDYLPDAFGPKDLEIKTLLMDEQDHGYALTGDALSQAAIAAANRSHMPYSKSPSGVALECKDGRIFSGSYAENAAFNPTLPPLQGALILLNLKGYDYPDIQRAVLAEKADAPLIQWDATSATLKALGCHSIDRVLLA.

CMP/dCMP-type deaminase domains follow at residues 48-168 (DEDA…FGPK) and 186-294 (LTGD…VLLA). 89-91 (NME) contributes to the substrate binding site. Zn(2+) is bound at residue histidine 102. The Proton donor role is filled by glutamate 104. Residues cysteine 129 and cysteine 132 each coordinate Zn(2+).

The protein belongs to the cytidine and deoxycytidylate deaminase family. In terms of assembly, homodimer. Requires Zn(2+) as cofactor.

The enzyme catalyses cytidine + H2O + H(+) = uridine + NH4(+). It catalyses the reaction 2'-deoxycytidine + H2O + H(+) = 2'-deoxyuridine + NH4(+). Functionally, this enzyme scavenges exogenous and endogenous cytidine and 2'-deoxycytidine for UMP synthesis. This Escherichia coli O7:K1 (strain IAI39 / ExPEC) protein is Cytidine deaminase.